The chain runs to 1048 residues: 3-hydroxy-3-methylglutaryl-coenzyme A reductase (1048 aa).

The Cytoplasmic portion of the chain corresponds to 1–32; the sequence is MDPVVRKPDPGGVQHRVTKALRAIVGHACRHP. The chain crosses the membrane as a helical span at residues 33–53; that stretch reads IHTLLVTALTAATTHLHVLEG. Topologically, residues 54–220 are lumenal; sequence TYQATHRGLA…FLHRVHHAET (167 aa). A helical membrane pass occupies residues 221–241; that stretch reads VDLVIIGLSYLAMNMTVVSLF. An SSD domain is found at 222–403; that stretch reads DLVIIGLSYL…FTFYATILCV (182 aa). Residues 242–250 lie on the Cytoplasmic side of the membrane; it reads RVMRHLGSR. The helical transmembrane segment at 251-271 threads the bilayer; sequence FWLAASVLLSGAFAFVLGLGI. Topologically, residues 272-276 are lumenal; that stretch reads TTTCD. The chain crosses the membrane as a helical span at residues 277–297; sequence VPVDMLLLFEGIPYLVLTVGF. The Cytoplasmic segment spans residues 298 to 348; sequence EKPIQLTRAVLCVSEELWGGGQRQVPNGASSDDSRQNQLIPNIIQLAVDRE. A helical transmembrane segment spans residues 349–369; that stretch reads GWYIVRSYLLEIGALALGAVL. At 370–377 the chain is on the lumenal side; the sequence is RPKDSLGH. A helical transmembrane segment spans residues 378 to 398; it reads FCFLAAWTLLIDAVLLFTFYA. Over 399 to 439 the chain is Cytoplasmic; it reads TILCVKLEITRIRSPGGLGQVNAKHPSGIFGHKVKSTNITW. The helical transmembrane segment at 440 to 460 threads the bilayer; that stretch reads WKLLTVGGFVLCHFLQLSPFF. The Lumenal segment spans residues 461 to 542; the sequence is YRVMGEYMAN…LDGLESPLGR (82 aa). 2 N-linked (GlcNAc...) asparagine glycosylation sites follow: Asn-470 and Asn-520. The helical transmembrane segment at 543–563 threads the bilayer; sequence LCLMGALVVSLVLNNHLIHAA. Residues 564–1048 lie on the Cytoplasmic side of the membrane; sequence RWHAWPQARE…NRSAGATVKK (485 aa). Residue Glu-729 is the Charge relay system of the active site. Residue 735-741 participates in CoA binding; the sequence is SASRGCK. NADP(+)-binding positions include 796 to 798 and 823 to 831; these read SRF and DAMGMNMIS. Lys-863 functions as the Charge relay system in the catalytic mechanism. 892-894 lines the CoA pocket; it reads VLK. Asp-939 (charge relay system) is an active-site residue. Residue 1034–1035 coordinates CoA; it reads AH. His-1035 acts as the Proton donor in catalysis. 1039–1040 is an NADP(+) binding site; the sequence is NR.

This sequence belongs to the HMG-CoA reductase family.

It is found in the endoplasmic reticulum membrane. It carries out the reaction (R)-mevalonate + 2 NADP(+) + CoA = (3S)-3-hydroxy-3-methylglutaryl-CoA + 2 NADPH + 2 H(+). It functions in the pathway metabolic intermediate biosynthesis; (R)-mevalonate biosynthesis; (R)-mevalonate from acetyl-CoA: step 3/3. HMG-CoA reductase; part of the first module of ergosterol biosynthesis pathway that includes the early steps of the pathway, conserved across all eukaryotes, and which results in the formation of mevalonate from acetyl-coenzyme A (acetyl-CoA). In this module, the cytosolic acetyl-CoA acetyltransferase catalyzes the formation of acetoacetyl-CoA. The hydroxymethylglutaryl-CoA synthase then condenses acetyl-CoA with acetoacetyl-CoA to form HMG-CoA. The rate-limiting step of the early module is the reduction to mevalonate by the 3-hydroxy-3-methylglutaryl-coenzyme A (HMG-CoA) reductase. The chain is 3-hydroxy-3-methylglutaryl-coenzyme A reductase from Aspergillus terreus.